Consider the following 224-residue polypeptide: UPF0758 protein Nmul_A2138 (224 aa).

The 123-residue stretch at 102 to 224 (AMDSPGPVRA…TLSFAEQGLI (123 aa)) folds into the MPN domain. His173, His175, and Asp186 together coordinate Zn(2+). Positions 173 to 186 (HNHPSGAAEPSHAD) match the JAMM motif motif.

Belongs to the UPF0758 family.

This Nitrosospira multiformis (strain ATCC 25196 / NCIMB 11849 / C 71) protein is UPF0758 protein Nmul_A2138.